The sequence spans 490 residues: Cyclin-T1-3 (490 aa).

Disordered regions lie at residues 275-391 (RVAP…GDVA) and 414-490 (AAED…RLRS). 2 stretches are compositionally biased toward polar residues: residues 282–298 (QGND…NQRA) and 352–365 (TANS…SSTM). 2 stretches are compositionally biased toward basic and acidic residues: residues 367–391 (AMKK…GDVA) and 457–490 (QEYR…RLRS).

It belongs to the cyclin family. Cyclin T subfamily.

In Oryza sativa subsp. japonica (Rice), this protein is Cyclin-T1-3 (CYCT1-3).